The chain runs to 208 residues: Large ribosomal subunit protein uL4 (208 aa).

A disordered region spans residues 58–77; it reads RGGGRKPWRQKGTGRARQGS. Over residues 60-71 the composition is skewed to basic residues; the sequence is GGRKPWRQKGTG.

Belongs to the universal ribosomal protein uL4 family. As to quaternary structure, part of the 50S ribosomal subunit.

Its function is as follows. One of the primary rRNA binding proteins, this protein initially binds near the 5'-end of the 23S rRNA. It is important during the early stages of 50S assembly. It makes multiple contacts with different domains of the 23S rRNA in the assembled 50S subunit and ribosome. Functionally, forms part of the polypeptide exit tunnel. The sequence is that of Large ribosomal subunit protein uL4 from Caldicellulosiruptor bescii (strain ATCC BAA-1888 / DSM 6725 / KCTC 15123 / Z-1320) (Anaerocellum thermophilum).